The following is a 196-amino-acid chain: Chromophore lyase CpcT/CpeT (196 aa).

This sequence belongs to the CpcT/CpeT biliprotein lyase family.

In terms of biological role, covalently attaches a chromophore to Cys residue(s) of phycobiliproteins. The polypeptide is Chromophore lyase CpcT/CpeT (Synechocystis sp. (strain ATCC 27184 / PCC 6803 / Kazusa)).